A 284-amino-acid polypeptide reads, in one-letter code: D-tagatose-1,6-bisphosphate aldolase subunit GatY (284 aa).

Asp-82 (proton donor) is an active-site residue. His-83 and His-180 together coordinate Zn(2+). A dihydroxyacetone phosphate-binding site is contributed by Gly-181. Residue His-208 coordinates Zn(2+). Dihydroxyacetone phosphate is bound by residues 209 to 211 (GAS) and 230 to 233 (NVAT).

Belongs to the class II fructose-bisphosphate aldolase family. TagBP aldolase GatY subfamily. Forms a complex with GatZ. It depends on Zn(2+) as a cofactor.

The catalysed reaction is D-tagatofuranose 1,6-bisphosphate = D-glyceraldehyde 3-phosphate + dihydroxyacetone phosphate. It participates in carbohydrate metabolism; D-tagatose 6-phosphate degradation; D-glyceraldehyde 3-phosphate and glycerone phosphate from D-tagatose 6-phosphate: step 2/2. In terms of biological role, catalytic subunit of the tagatose-1,6-bisphosphate aldolase GatYZ, which catalyzes the reversible aldol condensation of dihydroxyacetone phosphate (DHAP or glycerone-phosphate) with glyceraldehyde 3-phosphate (G3P) to produce tagatose 1,6-bisphosphate (TBP). Requires GatZ subunit for full activity and stability. Is involved in the catabolism of galactitol. The polypeptide is D-tagatose-1,6-bisphosphate aldolase subunit GatY (Shigella boydii serotype 4 (strain Sb227)).